The chain runs to 190 residues: GTP cyclohydrolase 1 (190 aa).

Zn(2+) is bound by residues Cys-78, His-81, and Cys-150.

The protein belongs to the GTP cyclohydrolase I family. As to quaternary structure, toroid-shaped homodecamer, composed of two pentamers of five dimers.

The enzyme catalyses GTP + H2O = 7,8-dihydroneopterin 3'-triphosphate + formate + H(+). It functions in the pathway cofactor biosynthesis; 7,8-dihydroneopterin triphosphate biosynthesis; 7,8-dihydroneopterin triphosphate from GTP: step 1/1. K(+) ions moderately increases the Vmax, whereas UTP and Ca(2+) and Mg(2+) ions drastically increase the Km for GTP. The chain is GTP cyclohydrolase 1 (folE) from Bacillus subtilis (strain 168).